The sequence spans 123 residues: Potassium voltage-gated channel subfamily E member 2 (123 aa).

Asn-6 and Asn-29 each carry an N-linked (GlcNAc...) asparagine glycan. The chain crosses the membrane as a helical span at residues 49-69 (VILYLMVMIGMFSFIVVAILV). The Cytoplasmic portion of the chain corresponds to 70-123 (STVKSKRREHSQHPYHQYIVEDWQEKYKSQILHLEDSKATIHENMGATGFTVSP).

Belongs to the potassium channel KCNE family. In terms of assembly, interacts with KCNB1. Associates with KCNH2/ERG1. May associate with KCNQ2 and KCNQ3. Associates with HCN1 and probably HCN2. Heteromultimer with KCNC2. Interacts with KCNC2. Interacts with KCNQ1. Forms a heterooligomer complex with KCNQ1 that targets to the membrane raft and leading to currents with an apparently instantaneous activation, a rapid deactivation process and a linear current-voltage relationship and decreases the amplitude of the outward current.

It is found in the cell membrane. The protein localises to the apical cell membrane. In terms of biological role, ancillary protein that functions as a regulatory subunit of the voltage-gated potassium (Kv) channel complex composed of pore-forming and potassium-conducting alpha subunits and of regulatory beta subunits. KCNE2 beta subunit modulates the gating kinetics and enhances stability of the channel complex. Alters the gating of the delayed rectifier Kv channel containing KCNB1 alpha subunit. Associates with KCNH2/HERG alpha subunit Kv channel to form the rapidly activating component of the delayed rectifying potassium current (IKr) in heart. May associate with KCNQ2 and/or KCNQ3 alpha subunits to modulate the native M-type current. May associate with HCN1 and HCN2 channel subunits to increase potassium current. Forms a heterooligomer complex with KCNQ1/KVLQT1 alpha subunits which leads to currents with an apparently instantaneous activation, a rapid deactivation process and a linear current-voltage relationship and decreases the amplitude of the outward current. KCNQ1-KCNE2 channel associates with Na(+)-coupled myo-inositol symporter in the apical membrane of choroid plexus epithelium and regulates the myo-inositol gradient between blood and cerebrospinal fluid with an impact on neuron excitability. This chain is Potassium voltage-gated channel subfamily E member 2, found in Mus musculus (Mouse).